A 276-amino-acid chain; its full sequence is Rhomboid protease GlpG (276 aa).

A run of 6 helical transmembrane segments spans residues 94-114 (GPVT…MQIL), 142-162 (ALMH…WYLG), 169-189 (LGSG…GYVQ), 192-212 (FSGP…GYVW), 229-249 (LIIF…GMSM), and 250-270 (ANGA…VDSL). The Nucleophile role is filled by S201. The active site involves H254.

The protein belongs to the peptidase S54 family.

It is found in the cell inner membrane. The enzyme catalyses Cleaves type-1 transmembrane domains using a catalytic dyad composed of serine and histidine that are contributed by different transmembrane domains.. Its function is as follows. Rhomboid-type serine protease that catalyzes intramembrane proteolysis. The chain is Rhomboid protease GlpG from Escherichia coli O157:H7.